Consider the following 252-residue polypeptide: 2-succinyl-6-hydroxy-2,4-cyclohexadiene-1-carboxylate synthase (252 aa).

It belongs to the AB hydrolase superfamily. MenH family. In terms of assembly, monomer.

The catalysed reaction is 5-enolpyruvoyl-6-hydroxy-2-succinyl-cyclohex-3-ene-1-carboxylate = (1R,6R)-6-hydroxy-2-succinyl-cyclohexa-2,4-diene-1-carboxylate + pyruvate. It functions in the pathway quinol/quinone metabolism; 1,4-dihydroxy-2-naphthoate biosynthesis; 1,4-dihydroxy-2-naphthoate from chorismate: step 3/7. It participates in quinol/quinone metabolism; menaquinone biosynthesis. In terms of biological role, catalyzes a proton abstraction reaction that results in 2,5-elimination of pyruvate from 2-succinyl-5-enolpyruvyl-6-hydroxy-3-cyclohexene-1-carboxylate (SEPHCHC) and the formation of 2-succinyl-6-hydroxy-2,4-cyclohexadiene-1-carboxylate (SHCHC). This is 2-succinyl-6-hydroxy-2,4-cyclohexadiene-1-carboxylate synthase from Salmonella arizonae (strain ATCC BAA-731 / CDC346-86 / RSK2980).